Reading from the N-terminus, the 559-residue chain is MRKFAYCKVVLATSLIWVLLDMFLLLYFSECNKCDEKKERGLPAGDVLEPVQKPHEGPGEMGKPVVIPKEDQDKMKEMFKINQFNLMASEMIALNRSLPDVRLEGCKTKVYPDNLPTTSVVIVFHNEAWSTLLRTVHSVINRSPRHMLEEIVLVDDASERDFLKRPLESYVKKLKVPVHVIRMEQRSGLIRARLKGAAVSKGQVITFLDAHCECTVGWLEPLLARIKHDRKTVVCPIIDVISDDTFEYMAGSDMTYGGFNWKLNFRWYPVPQREMDRRKGDRTLPVRTPTMAGGLFSIDRDYFQEIGTYDAGMDIWGGENLEISFRIWQCGGTLEIVTCSHVGHVFRKATPYTFPGGTGQIINKNNRRLAEVWMDEFKTFFYIISPGVTKVDYGDISSRLGLRHKLQCRPFSWYLENIYPDSQIPRHYSSLGEIRNVETNQCLDNMARKENEKVGIFNCHGMGGNQVFSYTANKEIRTDDLCLDVSKLNGPVTMLKCHHLKGNQLWEYDPVKLTLQHVNSNQCLDKATEEDSQVPSIRDCSGSRSQQWLLRNVTLPEIF.

Residues 1-8 (MRKFAYCK) lie on the Cytoplasmic side of the membrane. The helical; Signal-anchor for type II membrane protein transmembrane segment at 9–28 (VVLATSLIWVLLDMFLLLYF) threads the bilayer. At 29–559 (SECNKCDEKK…LRNVTLPEIF (531 aa)) the chain is on the lumenal side. Residues 45 to 66 (GDVLEPVQKPHEGPGEMGKPVV) are disordered. N95 is a glycosylation site (N-linked (GlcNAc...) asparagine). 5 cysteine pairs are disulfide-bonded: C106/C339, C330/C408, C442/C459, C482/C497, and C523/C540. Positions 115 to 225 (LPTTSVVIVF…VGWLEPLLAR (111 aa)) are catalytic subdomain A. 2 residues coordinate substrate: D156 and R186. Positions 209 and 211 each coordinate Mn(2+). Positions 285 to 347 (PVRTPTMAGG…TCSHVGHVFR (63 aa)) are catalytic subdomain B. Residue W316 participates in substrate binding. H344 contacts Mn(2+). Positions 347 and 352 each coordinate substrate. The Ricin B-type lectin domain occupies 429–551 (SSLGEIRNVE…GSRSQQWLLR (123 aa)). An N-linked (GlcNAc...) asparagine glycan is attached at N552.

It belongs to the glycosyltransferase 2 family. GalNAc-T subfamily. It depends on Mn(2+) as a cofactor.

The protein resides in the golgi apparatus. It is found in the golgi stack membrane. Its subcellular location is the secreted. The catalysed reaction is L-seryl-[protein] + UDP-N-acetyl-alpha-D-galactosamine = a 3-O-[N-acetyl-alpha-D-galactosaminyl]-L-seryl-[protein] + UDP + H(+). The enzyme catalyses L-threonyl-[protein] + UDP-N-acetyl-alpha-D-galactosamine = a 3-O-[N-acetyl-alpha-D-galactosaminyl]-L-threonyl-[protein] + UDP + H(+). Its pathway is protein modification; protein glycosylation. In terms of biological role, catalyzes the initial reaction in O-linked oligosaccharide biosynthesis, the transfer of an N-acetyl-D-galactosamine residue to a serine or threonine residue on the protein receptor. Has a broad spectrum of substrates such as apomucin-, MUC5AC-, MUC1- and MUC2-derived peptides. In Sus scrofa (Pig), this protein is Polypeptide N-acetylgalactosaminyltransferase 1.